Reading from the N-terminus, the 807-residue chain is MELHQWCRHIIVFLLNVWIPSCFAQTTPPARSSPTPTPQTADNPDSLKFRLSGFPRKHNEGRIEVFYKGEWGTICDDDFSLANAHVLCRQLGFVSATGWTHSAKYGKGAGKIWLDNVQCSGSERSVSVCKSRGWGNSDCTHDEDAGVICKDERLPGFVDSNVIEVQVDENRVEEVRLRPVFTTATKRMPVTEGVVEVKNKDGWAQICDIGWTPKNTHVVCGMMGFPHEKKVNKNFYKLYAERQKNFFLVHSVACLGTEVHLAACPLEFNYGNATESCPGGMPAVVSCVPGPLYTQSPTMKKKLKMPPTTRLKGGAKYGEGRVEVLKGSEWGTVCDDRWNLVSASVVCREMGFGSAKEALTGASMGKGLGPIHMNEVQCTGNERSLWSCRYKNITAEDCKHTEDASVRCNVPYMGYEKTVRILGGRTRYEGRVEVLHREADGTLRWGLICGEGWGTQEAMVLCRQLGLGYANHGLQVRLSGGRSPYEGRVEVRVGQRWGSVCSEGWSTKEAMVLCRQLGLGFSMHAITETWYWDSSNVTDMVMSGVKCTGDEMSISQCQHHRTVNCQKAAARFAAGVICSETASDLVLNAPLVQQTTYIEDRPLHMLYCAAEEDCLSKSAASANWPYGHRRLLRFSSQIHNIGRADFRPKAGRHSWVWHACHGHYHSMDIFTHYDLMSANGTKVAEGHKASFCLEDTDCDEGVSKRYKCANFGEQGITVGCWDLYRHDIDCQWIDITDVKPGNYILQVVINPNYEVSESDFTNNAMKCNCKYDGHRIWVHNCHIGDAFSEEAEKKFEKYPGQLNNQIS.

Positions 1 to 24 (MELHQWCRHIIVFLLNVWIPSCFA) are cleaved as a signal peptide. SRCR domains lie at 49 to 150 (FRLS…VICK), 175 to 288 (VRLR…VSCV), 309 to 409 (TRLK…VRCN), 419 to 470 (VRIL…LGYA), and 476 to 579 (VRLS…VICS). Disulfide bonds link C75-C139, C88-C149, C119-C129, C207-C277, C220-C287, C254-C264, C334-C398, C347-C408, and C378-C388. N-linked (GlcNAc...) asparagine glycosylation is present at N272. N392 carries N-linked (GlcNAc...) asparagine glycosylation. 2 disulfide bridges follow: C514/C578 and C547/C557. N-linked (GlcNAc...) asparagine glycosylation is present at N536. The N-linked (GlcNAc...) asparagine glycan is linked to N679. The lysine tyrosylquinone (Lys-Tyr) cross-link spans 688-724 (KASFCLEDTDCDEGVSKRYKCANFGEQGITVGCWDLY). Y724 is subject to 2',4',5'-topaquinone.

It belongs to the lysyl oxidase family. Cu cation is required as a cofactor. It depends on lysine tyrosylquinone residue as a cofactor. In terms of processing, the lysine tyrosylquinone cross-link (LTQ) is generated by condensation of the epsilon-amino group of a lysine with a topaquinone produced by oxidation of tyrosine.

It localises to the secreted. It is found in the extracellular space. The protein localises to the cytoplasm. The protein resides in the nucleus. It carries out the reaction L-lysyl-[protein] + O2 + H2O = (S)-2-amino-6-oxohexanoyl-[protein] + H2O2 + NH4(+). It catalyses the reaction N(6)-acetyl-L-lysyl-[protein] + O2 + H2O = acetamide + (S)-2-amino-6-oxohexanoyl-[protein] + H2O2. Its function is as follows. Protein-lysine 6-oxidase that mediates the oxidation of peptidyl lysine residues to allysine in target proteins. Catalyzes the post-translational oxidative deamination of peptidyl lysine residues in precursors of elastin and different types of collagens, a prerequisite in the formation of cross-links between collagens and elastin. Can mediate oxidation of lysine residues that are acetylated. Also able to catalyze deacetylation of lysine residues. Required for maturation of neural crest derived cartilage elements. The sequence is that of Lysyl oxidase homolog 3B from Danio rerio (Zebrafish).